We begin with the raw amino-acid sequence, 1026 residues long: Contactin-4 (1026 aa).

Positions 1-18 (MRLPWELLVLQSFILCLA) are cleaved as a signal peptide. Ig-like C2-type domains lie at 32 to 117 (PSPV…AKLQ), 122 to 207 (DNFK…KVLG), 225 to 311 (PKIE…GQLT), 316 to 400 (PNWI…AELS), 406 to 493 (PDFS…GNLV), and 497 to 586 (PTRV…DRLS). 6 disulfide bridges follow: Cys-50–Cys-100, Cys-144–Cys-194, Cys-247–Cys-295, Cys-337–Cys-384, Cys-429–Cys-477, and Cys-519–Cys-576. N-linked (GlcNAc...) asparagine glycosylation is found at Asn-65, Asn-90, and Asn-191. N-linked (GlcNAc...) asparagine glycans are attached at residues Asn-370, Asn-375, and Asn-466. Fibronectin type-III domains follow at residues 599-697 (PPEA…TEEA), 702-799 (TPAN…SAEE), 804-899 (PPAS…TRKP), and 900-995 (PPSQ…ISNA). Residues 685–710 (PSRPSEKRRTEEALPEVTPANVSGGG) form a disordered region. The segment covering 687–696 (RPSEKRRTEE) has biased composition (basic and acidic residues). N-linked (GlcNAc...) asparagine glycans are attached at residues Asn-705, Asn-764, Asn-858, Asn-893, Asn-911, Asn-929, and Asn-954. The segment covering 886-896 (GPSSATVNVTT) has biased composition (polar residues). A disordered region spans residues 886 to 907 (GPSSATVNVTTRKPPPSQPPGN). Ser-1000 is lipidated: GPI-anchor amidated serine. Positions 1001 to 1026 (GASTSNACTLSAISTIMISLTARSSL) are cleaved as a propeptide — removed in mature form.

It belongs to the immunoglobulin superfamily. Contactin family. Interacts with PTPRG. In terms of tissue distribution, mainly expressed in brain. Highly expressed in cerebellum and weakly expressed in corpus callosum, caudate nucleus, amygdala and spinal cord. Also expressed in testis, pancreas, thyroid, uterus, small intestine and kidney. Not expressed in skeletal muscle. Isoform 2 is weakly expressed in cerebral cortex.

Its subcellular location is the cell membrane. It is found in the secreted. Its function is as follows. Contactins mediate cell surface interactions during nervous system development. Has some neurite outgrowth-promoting activity. May be involved in synaptogenesis. This chain is Contactin-4 (CNTN4), found in Homo sapiens (Human).